Consider the following 196-residue polypeptide: Cupin-domain-containing oxidoreductase srdD (196 aa).

The interval 99–165 (DFGPGVESPL…GNGTLPGRVM (67 aa)) is cupin-like domain.

It belongs to the virC family.

Highly reducing polyketide synthase; part of the gene cluster that mediates the biosynthesis of sordarial, a salicylic aldehyde structurally related to the phytotoxin pyriculol. The most interesting aspect of this pathway is formation of an aromatic product from the highly reducing polyketide synthase srdA. SrdA synthesizes a reduced polyketide chain from one molecule of acetyl-CoA and five molecules of malonyl-CoA. The polyketide chain is then reductively released as an aldehyde. The oxidoreductases srdC, srdD and srdE then oxidize one of the hydroxy groups to facilitate the intramolecular aldol condensation, followed by dehydration to yield a salicylic aldehyde. This aldehyde can undergo facile reduction by endogenous reductases to yield the alcohol 1-hydroxy-2-hydroxymethyl-3-pent-1,3-dienylbenzene. The flavin-dependent srdI counteract against the propensity of the aldehydes to be reduced under physiological conditions and is responsible for reoxidizing 1-hydroxy-2-hydroxymethyl-3-pent-1,3-dienylbenzene back to the salicylic aldehyde. This salicylic aldehyde is then selectively epoxidized by the cupin-domain-containing oxidoreductase srdB to yield the epoxide, which can be hydrolyzed stereoselectively by the hydrolase srdG to give the final product sordarial. The polypeptide is Cupin-domain-containing oxidoreductase srdD (Neurospora crassa (strain ATCC 24698 / 74-OR23-1A / CBS 708.71 / DSM 1257 / FGSC 987)).